A 142-amino-acid polypeptide reads, in one-letter code: MFDFNGTLPLMMFQFFLLVAVLNAVFFKPLTQAIDERDGFIRTNNTEARERLAKAKSLTEQYEQELAGTRKQSQQVLADAQAEAQKIAQTQITEAQKQVQAEVMKAQAELESQKQSAFSELEKQVDTLSQQILNKLLGSTLA.

A helical membrane pass occupies residues Thr-7–Phe-27.

This sequence belongs to the ATPase B chain family. As to quaternary structure, F-type ATPases have 2 components, F(1) - the catalytic core - and F(0) - the membrane proton channel. F(1) has five subunits: alpha(3), beta(3), gamma(1), delta(1), epsilon(1). F(0) has four main subunits: a(1), b(1), b'(1) and c(10-14). The alpha and beta chains form an alternating ring which encloses part of the gamma chain. F(1) is attached to F(0) by a central stalk formed by the gamma and epsilon chains, while a peripheral stalk is formed by the delta, b and b' chains.

The protein localises to the cellular thylakoid membrane. F(1)F(0) ATP synthase produces ATP from ADP in the presence of a proton or sodium gradient. F-type ATPases consist of two structural domains, F(1) containing the extramembraneous catalytic core and F(0) containing the membrane proton channel, linked together by a central stalk and a peripheral stalk. During catalysis, ATP synthesis in the catalytic domain of F(1) is coupled via a rotary mechanism of the central stalk subunits to proton translocation. In terms of biological role, component of the F(0) channel, it forms part of the peripheral stalk, linking F(1) to F(0). The b'-subunit is a diverged and duplicated form of b found in plants and photosynthetic bacteria. In Acaryochloris marina (strain MBIC 11017), this protein is ATP synthase subunit b'.